We begin with the raw amino-acid sequence, 369 residues long: Queuine tRNA-ribosyltransferase accessory subunit 2 (369 aa).

Residues 263–282 (SSKLTEVEEENGNDSSNDQD) form a disordered region. Positions 308, 310, 313, and 339 each coordinate Zn(2+).

Belongs to the queuine tRNA-ribosyltransferase family. QTRT2 subfamily. As to quaternary structure, heterodimer of a catalytic subunit and an accessory subunit. Requires Zn(2+) as cofactor.

It localises to the cytoplasm. Functionally, non-catalytic subunit of the queuine tRNA-ribosyltransferase (TGT) that catalyzes the base-exchange of a guanine (G) residue with queuine (Q) at position 34 (anticodon wobble position) in tRNAs with GU(N) anticodons (tRNA-Asp, -Asn, -His and -Tyr), resulting in the hypermodified nucleoside queuosine (7-(((4,5-cis-dihydroxy-2-cyclopenten-1-yl)amino)methyl)-7-deazaguanosine). The polypeptide is Queuine tRNA-ribosyltransferase accessory subunit 2 (Trichoplax adhaerens (Trichoplax reptans)).